Here is a 344-residue protein sequence, read N- to C-terminus: L-rhamnose-proton symporter (344 aa).

Helical transmembrane passes span 4 to 24, 38 to 58, 68 to 88, 101 to 121, 137 to 157, 175 to 195, 214 to 234, 259 to 279, 290 to 310, and 323 to 343; these read AITM…CFYA, WSVG…ALLL, FSLS…IGNI, MGIG…TPII, TLLG…AGQL, LVLA…MNAA, LPSY…FCFI, VLLS…YAWG, ISWM…GLVL, and VLSL…IGMA.

The protein belongs to the L-rhamnose transporter (TC 2.A.7.6) family.

It localises to the cell inner membrane. It carries out the reaction L-rhamnopyranose(in) + H(+)(in) = L-rhamnopyranose(out) + H(+)(out). Uptake of L-rhamnose across the cytoplasmic membrane with the concomitant transport of protons into the cell (symport system). This is L-rhamnose-proton symporter from Escherichia coli O9:H4 (strain HS).